The primary structure comprises 1184 residues: Cartilage intermediate layer protein 1 (1184 aa).

The N-terminal stretch at 1–21 is a signal peptide; sequence MVGTKAWVFSFLVLEVTSVLG. N-linked (GlcNAc...) asparagine glycosylation is found at N129 and N132. One can recognise a TSP type-1 domain in the interval 149-201; that stretch reads ERIWSPWSPWSKCSAACGQTGVQTRTRICLAEMVSLCSEASEEGQHCMGQDCT. Disulfide bonds link C161-C195, C165-C200, C177-C185, and C330-C376. One can recognise an Ig-like C2-type domain in the interval 309-395; that stretch reads PYMVMNPETK…KSKVAQLIVI (87 aa). Residues N346, N420, N550, N631, N1000, and N1056 are each glycosylated (N-linked (GlcNAc...) asparagine). The tract at residues 1136-1170 is disordered; that stretch reads TPAQSPAAGTVQGRVPSRRQQRASRGGQRQGGVVA. The span at 1158-1170 shows a compositional bias: low complexity; the sequence is ASRGGQRQGGVVA.

Monomer. Interacts with TGFB1. In terms of processing, cleaved into 2 chains possibly by a furin-like protease upon or preceding secretion. As to expression, specifically expressed in cartilage. Localizes in the intermediates layer of articular cartilage but neither in the superficial nor in the deepest regions. Specifically and highly expressed in intervertebral disk tissue. Expression increases with aging in hip articular cartilage. Overexpressed in articular hyaline cartilage from patients with calcium pyrophosphate dihydrate crystal deposition disease (CPPD). Expression in intervertebral disk tissue from individuals with lumbar disk disease increases as disk degeneration progresses.

The protein localises to the secreted. Its subcellular location is the extracellular space. It localises to the extracellular matrix. Functionally, probably plays a role in cartilage scaffolding. May act by antagonizing TGF-beta1 (TGFB1) and IGF1 functions. Has the ability to suppress IGF1-induced proliferation and sulfated proteoglycan synthesis, and inhibits ligand-induced IGF1R autophosphorylation. May inhibit TGFB1-mediated induction of cartilage matrix genes via its interaction with TGFB1. Overexpression may lead to impair chondrocyte growth and matrix repair and indirectly promote inorganic pyrophosphate (PPi) supersaturation in aging and osteoarthritis cartilage. The polypeptide is Cartilage intermediate layer protein 1 (CILP) (Homo sapiens (Human)).